We begin with the raw amino-acid sequence, 726 residues long: MTTEAKCPFLHPAGAGRALQEWWPERLNLHILRQNAPLSDPMGEAFDYAKAFNSLDLAAVKKDLEALMTDSQSWWPADFGHYGPLFVRMAWHAAGTYRIGDGRGGAGAGQQRFAPTNSWPDNVSLDKARRLIWPIKQKYGRKISWADLIVLTGNVALESMGFKTFGFGGGREDVYEPDESVYWGNEAEWLADKRYSGNRNLENPLAAVQMGLIYVNPEGPNGNPDPVAAAIDIRETFRRMAMNDEETVALIAGGHAFGKTHGAGPASHVGPEPEAAGLEEQGLGWRSSFGTGKGGDAIGSGLEVIWTTTPTKWSNDFFKHLFEYEWELTKSPAGAHQWKPKGNAGAGTVPDPADPSKRRSPSMLTTDLSLRFDSIYGKISRRYYDHPDELADAFARAWFKLTHRDMGPRARYLGPEVPKEELLWQDPIPPVDHPLIDAKDVAALKAKVQASGLTVPQLVSTAWASASTFRGSDKRGGANGARIRLAPQKDWDVNQPAELAKVLVKLESIQSEFNKAQSGGKKVSMADLIVLAGCAGVEQAAKSAGQDVTVPFSPGRMDTTQEKTDLDAMVVLEPIADGFRNYLQGKFSVRAEALLVDKAQLLKLTVPEMTALVGGLRVLGANFGNSQHGVFTKRPGTLTNDFFVNLLDMGTEWKPVSEEREVFEGSDRATGTPRWTGTRVDLVFGSNSELRAVAEVYGAADAQEKFVQDFVAAWSKVMNLDRFDLK.

The segment at residues 91-214 (WHAAGTYRIG…LAAVQMGLIY (124 aa)) is a cross-link (tryptophyl-tyrosyl-methioninium (Trp-Tyr) (with M-240)). H92 functions as the Proton acceptor in the catalytic mechanism. A cross-link (tryptophyl-tyrosyl-methioninium (Tyr-Met) (with W-91)) is located at residues 214–240 (YVNPEGPNGNPDPVAAAIDIRETFRRM). Residue H255 coordinates heme b. The interval 335–362 (AHQWKPKGNAGAGTVPDPADPSKRRSPS) is disordered.

Belongs to the peroxidase family. Peroxidase/catalase subfamily. Homodimer or homotetramer. The cofactor is heme b. Post-translationally, formation of the three residue Trp-Tyr-Met cross-link is important for the catalase, but not the peroxidase activity of the enzyme.

It catalyses the reaction H2O2 + AH2 = A + 2 H2O. It carries out the reaction 2 H2O2 = O2 + 2 H2O. Its function is as follows. Bifunctional enzyme with both catalase and broad-spectrum peroxidase activity. This chain is Catalase-peroxidase, found in Cupriavidus metallidurans (strain ATCC 43123 / DSM 2839 / NBRC 102507 / CH34) (Ralstonia metallidurans).